Here is a 622-residue protein sequence, read N- to C-terminus: Polypeptide N-acetylgalactosaminyltransferase 6 (622 aa).

The Cytoplasmic portion of the chain corresponds to 1–8 (MRLLRRRH). A helical; Signal-anchor for type II membrane protein membrane pass occupies residues 9-28 (MPLRLAMVGCAFVLFLFLLH). Residues 29 to 622 (RDVSSREEAT…SDPHQLWLFV (594 aa)) are Lumenal-facing. Residue N86 is glycosylated (N-linked (GlcNAc...) asparagine). 2 disulfide bridges follow: C165/C402 and C393/C474. Residues 176 to 285 (LATTSVIIVF…HGWLEPLLAR (110 aa)) form a catalytic subdomain A region. Positions 269, 271, and 407 each coordinate Mn(2+). Residues 348–410 (PIKSPTFAGG…PCSVVGHVFR (63 aa)) form a catalytic subdomain B region. A glycan (N-linked (GlcNAc...) asparagine) is linked at N476. The region spanning 506–622 (TNQCLDVGEN…SDPHQLWLFV (117 aa)) is the Ricin B-type lectin domain. C509 and C527 are joined by a disulfide. D511, E514, H528, and N533 together coordinate UDP-N-acetyl-alpha-D-galactosamine. 2 disulfide bridges follow: C553–C566 and C597–C610.

The protein belongs to the glycosyltransferase 2 family. GalNAc-T subfamily. It depends on Mn(2+) as a cofactor. Expressed in placenta and trachea. Weakly expressed in brain and pancreas. Expressed in fibroblast. Weakly or not expressed in lung, liver, muscle, kidney, spleen, thymus, prostate, testis, ovary, intestine, colon, leukocyte, stomach, thyroid, spinal cord, lymph node, trachea, adrenal gland and bone marrow.

The protein localises to the golgi apparatus membrane. The enzyme catalyses L-seryl-[protein] + UDP-N-acetyl-alpha-D-galactosamine = a 3-O-[N-acetyl-alpha-D-galactosaminyl]-L-seryl-[protein] + UDP + H(+). It catalyses the reaction L-threonyl-[protein] + UDP-N-acetyl-alpha-D-galactosamine = a 3-O-[N-acetyl-alpha-D-galactosaminyl]-L-threonyl-[protein] + UDP + H(+). It functions in the pathway protein modification; protein glycosylation. Its function is as follows. Catalyzes the initial reaction in O-linked oligosaccharide biosynthesis, the transfer of an N-acetyl-D-galactosamine residue to a serine or threonine residue on the protein receptor. May participate in synthesis of oncofetal fibronectin. Has activity toward MUC1A, MUC2, EA2 and fibronectin peptides. Glycosylates FGF23. The chain is Polypeptide N-acetylgalactosaminyltransferase 6 (GALNT6) from Homo sapiens (Human).